The primary structure comprises 290 residues: 4-hydroxy-tetrahydrodipicolinate synthase (290 aa).

T44 is a binding site for pyruvate. The active-site Proton donor/acceptor is Y131. The active-site Schiff-base intermediate with substrate is K159. I201 serves as a coordination point for pyruvate.

It belongs to the DapA family. In terms of assembly, homotetramer; dimer of dimers.

It is found in the cytoplasm. It carries out the reaction L-aspartate 4-semialdehyde + pyruvate = (2S,4S)-4-hydroxy-2,3,4,5-tetrahydrodipicolinate + H2O + H(+). The protein operates within amino-acid biosynthesis; L-lysine biosynthesis via DAP pathway; (S)-tetrahydrodipicolinate from L-aspartate: step 3/4. Functionally, catalyzes the condensation of (S)-aspartate-beta-semialdehyde [(S)-ASA] and pyruvate to 4-hydroxy-tetrahydrodipicolinate (HTPA). The chain is 4-hydroxy-tetrahydrodipicolinate synthase from Jannaschia sp. (strain CCS1).